We begin with the raw amino-acid sequence, 227 residues long: MPTSPFIDDLIRDRRTKRGFLDQPVPIEMVKDILSVAKYTPSSSNTQPWRCYVLTGEARERVTTAAVEAYRGAPEGLKPEYSYFPEPLHEPYATRFNSFRGQLGDAEGCCRSDITGRRRYVERQFRFFDAPVGLIFTMDRRLEWASFICYGCFLQNIMLAAKGRGLDTCPQGLWSLQHPVLRTELNLPDDQMVVAGMSLGWADNSMAVNQMSMSRVELEEFTTFVHE.

14 to 18 (RRTKR) is a binding site for FMN. Position 44 (Ser-44) interacts with NADP(+). FMN contacts are provided by residues 172–173 (GL) and Arg-215.

Belongs to the nitroreductase family. FMN is required as a cofactor.

The catalysed reaction is N-phenylhydroxylamine + 2 NADP(+) + H2O = nitrobenzene + 2 NADPH + 2 H(+). It functions in the pathway xenobiotic degradation; nitrobenzene degradation. The protein operates within xenobiotic degradation; 4-chloronitrobenzene degradation. Functionally, involved in the biodegradation of chlorinated nitroaromatic compounds. Catalyzes the reduction of 4-chloronitrobenzene to yield 1-hydroxylamino-4-chlorobenzene. Probably also able to catalyze the two-electron reduction of nitrobenzene (NB) to produce a nitrosobenzene (NOB) intermediate, which is immediately reduced to hydroxylaminobenzene (HAB) by a second two-electron transfer. The protein is Chloronitrobenzene nitroreductase of Comamonas testosteroni (Pseudomonas testosteroni).